A 142-amino-acid chain; its full sequence is Large ribosomal subunit protein uL11 (142 aa).

It belongs to the universal ribosomal protein uL11 family. Part of the ribosomal stalk of the 50S ribosomal subunit. Interacts with L10 and the large rRNA to form the base of the stalk. L10 forms an elongated spine to which L12 dimers bind in a sequential fashion forming a multimeric L10(L12)X complex. Post-translationally, one or more lysine residues are methylated.

Forms part of the ribosomal stalk which helps the ribosome interact with GTP-bound translation factors. The chain is Large ribosomal subunit protein uL11 from Sinorhizobium fredii (strain NBRC 101917 / NGR234).